The sequence spans 173 residues: Photosystem I assembly protein Ycf3 (173 aa).

3 TPR repeats span residues 35–68 (AYIY…EENK), 72–105 (GETL…NPKQ), and 120–153 (GRFA…YPGG).

The protein belongs to the Ycf3 family.

The protein resides in the cellular thylakoid membrane. In terms of biological role, essential for the assembly of the photosystem I (PSI) complex. May act as a chaperone-like factor to guide the assembly of the PSI subunits. This is Photosystem I assembly protein Ycf3 from Prochlorococcus marinus subsp. pastoris (strain CCMP1986 / NIES-2087 / MED4).